The sequence spans 268 residues: Mediator of RNA polymerase II transcription subunit 8-A (268 aa).

Coiled-coil stretches lie at residues 1–26 (MQRE…KNSL) and 117–160 (VEEL…EERE). The interval 190-268 (GLSNRRPPGQ…KSASMHPYQR (79 aa)) is disordered. A compositionally biased stretch (polar residues) spans 223 to 246 (VPMSLQSNQQQQHMAGVSMSQGNQ).

It belongs to the Mediator complex subunit 8 family. Component of the Mediator complex. May be part of a multisubunit E3 ubiquitin-protein ligase complex.

It is found in the nucleus. It participates in protein modification; protein ubiquitination. Functionally, component of the Mediator complex, a coactivator involved in the regulated transcription of nearly all RNA polymerase II-dependent genes. Mediator functions as a bridge to convey information from gene-specific regulatory proteins to the basal RNA polymerase II transcription machinery. Mediator is recruited to promoters by direct interactions with regulatory proteins and serves as a scaffold for the assembly of a functional preinitiation complex with RNA polymerase II and the general transcription factors. May play a role as a target recruitment subunit in E3 ubiquitin-protein ligase complexes and thus in ubiquitination and subsequent proteasomal degradation of target proteins. This chain is Mediator of RNA polymerase II transcription subunit 8-A (med8-a), found in Xenopus laevis (African clawed frog).